We begin with the raw amino-acid sequence, 484 residues long: Monocarboxylate transporter 2 (484 aa).

The Cytoplasmic portion of the chain corresponds to 1-16; that stretch reads MPAPTAVPPPHPLPPD. The helical transmembrane segment at 17–37 threads the bilayer; sequence GGWGWVVVGASFISIGFSYAF. Residues 38 to 60 lie on the Extracellular side of the membrane; sequence PKSVTVFFKDIQEIFRAGHSKVA. The chain crosses the membrane as a helical span at residues 61 to 81; that stretch reads WISSIMLAVMYAGGPISSVLV. Residues 82–87 lie on the Cytoplasmic side of the membrane; that stretch reads NKYGSR. Residues 88–108 traverse the membrane as a helical segment; that stretch reads PVVVIGGLLCCTGMILASFST. The Extracellular portion of the chain corresponds to 109–116; sequence SMIQLYLT. Residues 117 to 137 traverse the membrane as a helical segment; the sequence is IGFISGLGLAFNLQPALTILG. The Cytoplasmic segment spans residues 138–144; sequence KYFYRRR. A helical membrane pass occupies residues 145 to 165; that stretch reads PLASGLAMTGSPVFLSSLAPF. Topologically, residues 166–174 are extracellular; the sequence is NQYLFNSYG. The helical transmembrane segment at 175-195 threads the bilayer; that stretch reads LKGSFLILGGIFLHSCVAGSL. Residues 196 to 245 lie on the Cytoplasmic side of the membrane; it reads MRPVGTSQQSPKSKSKVSSRHDSSTKKAPKLTLAQRINMFLDFSLFKHRG. The tract at residues 198 to 223 is disordered; the sequence is PVGTSQQSPKSKSKVSSRHDSSTKKA. A helical membrane pass occupies residues 246-266; it reads FLIYLSGNVIMFLGFFAPVIF. Over 267-281 the chain is Extracellular; sequence LSPYAKNRGVDDYKA. The chain crosses the membrane as a helical span at residues 282–302; the sequence is AYLLSVMAFVDMFSRPCGGLI. The Cytoplasmic portion of the chain corresponds to 303-311; it reads ANTRLVRPR. The chain crosses the membrane as a helical span at residues 312–332; it reads IQYFFSLAIVFTGVCHLLCPL. Over 333-337 the chain is Extracellular; it reads AESYT. Residues 338-358 traverse the membrane as a helical segment; it reads ALVVYAIFFGYGFGSVSSILF. Residues 359–372 lie on the Cytoplasmic side of the membrane; sequence ETLMDLVGPARFSS. Residues 373 to 393 form a helical membrane-spanning segment; it reads AVGLVTIVECCPVLLGPPLAG. Residues 394–405 are Extracellular-facing; sequence KLVDETGEHKYL. A helical transmembrane segment spans residues 406–426; sequence FVASGAIVVLAGIWLFIGNAI. At 427–484 the chain is on the cytoplasmic side; the sequence is NYRLLAKERKREKARKKKSPNRHSKELESLSKSNQDDVAVRVPQAHRSPSDKERESNI. The disordered stretch occupies residues 437–484; it reads REKARKKKSPNRHSKELESLSKSNQDDVAVRVPQAHRSPSDKERESNI. Residues 438 to 448 are compositionally biased toward basic residues; it reads EKARKKKSPNR. Composition is skewed to basic and acidic residues over residues 449–465 and 474–484; these read HSKE…DDVA and SPSDKERESNI.

It belongs to the major facilitator superfamily. Monocarboxylate porter (TC 2.A.1.13) family. Homodimer. Interacts with GRID2IP. Interacts with EMB; interaction mediates SLC16A7 targeting to the plasma membrane. Interacts with isoform 2 of BSG.

The protein resides in the cell membrane. Its subcellular location is the basolateral cell membrane. The protein localises to the cytoplasm. It catalyses the reaction 3-methyl-2-oxobutanoate(out) + H(+)(out) = 3-methyl-2-oxobutanoate(in) + H(+)(in). It carries out the reaction (S)-lactate(in) + H(+)(in) = (S)-lactate(out) + H(+)(out). The enzyme catalyses acetoacetate(out) + H(+)(out) = acetoacetate(in) + H(+)(in). The catalysed reaction is (R)-3-hydroxybutanoate(out) + H(+)(out) = (R)-3-hydroxybutanoate(in) + H(+)(in). It catalyses the reaction 4-methyl-2-oxopentanoate(out) + H(+)(out) = 4-methyl-2-oxopentanoate(in) + H(+)(in). It carries out the reaction pyruvate(out) + H(+)(out) = pyruvate(in) + H(+)(in). The enzyme catalyses (S)-3-hydroxybutanoate(out) + H(+)(out) = (S)-3-hydroxybutanoate(in) + H(+)(in). Its activity is regulated as follows. Transport activity exhibits steep dependence on substrate concentration. Substrate concentration sensitivity of SLC16A7 arises from the strong inter-subunit cooperativity of the SLC16A7 dimer during transport. Inhibited by AR-C155858. Its function is as follows. Proton-coupled monocarboxylate symporter. Catalyzes the rapid transport across the plasma membrane of monocarboxylates such as L-lactate, pyruvate and ketone bodies, acetoacetate, beta-hydroxybutyrate and acetate. Dimerization is functionally required and both subunits work cooperatively in transporting substrate. The polypeptide is Monocarboxylate transporter 2 (SLC16A7) (Meriones unguiculatus (Mongolian jird)).